The sequence spans 354 residues: S-adenosylmethionine:tRNA ribosyltransferase-isomerase (354 aa).

The protein belongs to the QueA family. In terms of assembly, monomer.

The protein resides in the cytoplasm. The catalysed reaction is 7-aminomethyl-7-carbaguanosine(34) in tRNA + S-adenosyl-L-methionine = epoxyqueuosine(34) in tRNA + adenine + L-methionine + 2 H(+). The protein operates within tRNA modification; tRNA-queuosine biosynthesis. In terms of biological role, transfers and isomerizes the ribose moiety from AdoMet to the 7-aminomethyl group of 7-deazaguanine (preQ1-tRNA) to give epoxyqueuosine (oQ-tRNA). The polypeptide is S-adenosylmethionine:tRNA ribosyltransferase-isomerase (Salmonella gallinarum (strain 287/91 / NCTC 13346)).